The primary structure comprises 288 residues: Elongation factor Ts (288 aa).

The tract at residues Thr82–Val85 is involved in Mg(2+) ion dislocation from EF-Tu.

The protein belongs to the EF-Ts family.

It is found in the cytoplasm. Functionally, associates with the EF-Tu.GDP complex and induces the exchange of GDP to GTP. It remains bound to the aminoacyl-tRNA.EF-Tu.GTP complex up to the GTP hydrolysis stage on the ribosome. The protein is Elongation factor Ts of Chlorobium phaeobacteroides (strain BS1).